Here is a 365-residue protein sequence, read N- to C-terminus: Protein BIIDXI (365 aa).

An N-terminal signal peptide occupies residues 1–21 (MKEMGVIVLLLLHSFFYVAFC). N-linked (GlcNAc...) asparagine glycans are attached at residues N48, N121, and N208.

Interacts with PME3. As to expression, mainly expressed in vascular tissues of roots, leaves, stamens and petals.

It is found in the secreted. It localises to the cell wall. Functionally, together with At5g11420, acts as a positive regulator of PME3 activity during several developmental processes, including reproductive organ development, hypocotyls elongation, seed germination and endosperm (testa) rupture at the micropyle, probably by modulating the pectin methylation status in cell walls. Involved in the regulation of pectin methylation degree to modulate cell wall physiology during cell separation, hypocotyl growth and embryo development. Required during embryo development, especially to regulate homogalacturonans (HG) methyl esterification in endosperm cell walls, a process related to embryo bending. Also implicated in hypocotyl growth and gravitropic response via the regulation of auxin efflux. Also regulates cell wall pectin upon root-knot nematode Meloidogyne incognita infection. This chain is Protein BIIDXI, found in Arabidopsis thaliana (Mouse-ear cress).